We begin with the raw amino-acid sequence, 144 residues long: MKPVAALGLDIGRKRIGVAGCDGLGLLATALTTIQRTTLEADLAAIAHWIEQRHIQVLVVGLPYAMDGSLGKQAKQTQKFARKLAEAFGLPIEYVDERLTSVEAENQLKAEKQYDRQQKGLVDQRAAQIILQQWLETRQCASKP.

This sequence belongs to the YqgF nuclease family.

It is found in the cytoplasm. Its function is as follows. Could be a nuclease involved in processing of the 5'-end of pre-16S rRNA. In Picosynechococcus sp. (strain ATCC 27264 / PCC 7002 / PR-6) (Agmenellum quadruplicatum), this protein is Putative pre-16S rRNA nuclease.